The chain runs to 72 residues: Large ribosomal subunit protein bL31 (72 aa).

Cys-17, Cys-19, Cys-37, and Cys-40 together coordinate Zn(2+).

The protein belongs to the bacterial ribosomal protein bL31 family. Type A subfamily. In terms of assembly, part of the 50S ribosomal subunit. Zn(2+) serves as cofactor.

In terms of biological role, binds the 23S rRNA. The protein is Large ribosomal subunit protein bL31 of Clostridium botulinum (strain ATCC 19397 / Type A).